The following is a 530-amino-acid chain: UDP-glucuronosyltransferase 2B17 (530 aa).

The signal sequence occupies residues 1–23 (MPGKWISALLLLQISCCFQSGNC). The chain crosses the membrane as a helical span at residues 494–510 (VIGFLLTCSAVIAVLTV).

This sequence belongs to the UDP-glycosyltransferase family.

The protein localises to the endoplasmic reticulum membrane. The enzyme catalyses glucuronate acceptor + UDP-alpha-D-glucuronate = acceptor beta-D-glucuronoside + UDP + H(+). The catalysed reaction is 17alpha-estradiol + UDP-alpha-D-glucuronate = 17alpha-estradiol 3-O-(beta-D-glucuronate) + UDP + H(+). It catalyses the reaction 17alpha-estradiol + UDP-alpha-D-glucuronate = 17alpha-estradiol 17-O-(beta-D-glucuronate) + UDP + H(+). It carries out the reaction 17beta-estradiol + UDP-alpha-D-glucuronate = 17beta-estradiol 17-O-(beta-D-glucuronate) + UDP + H(+). The enzyme catalyses 17beta-hydroxy-5alpha-androstan-3-one + UDP-alpha-D-glucuronate = 5alpha-dihydrotestosterone 17-O-(beta-D-glucuronate) + UDP + H(+). The catalysed reaction is testosterone + UDP-alpha-D-glucuronate = testosterone 17-O-(beta-D-glucuronate) + UDP + H(+). UDP-glucuronosyltransferase (UGT) that catalyzes phase II biotransformation reactions in which lipophilic substrates are conjugated with glucuronic acid to increase the metabolite's water solubility, thereby facilitating excretion into either the urine or bile. Catalyzes the glucuronidation of endogenous steroid hormones such as androgens (epitestosterone, androsterone) and estrogens (estradiol, epiestradiol). The sequence is that of UDP-glucuronosyltransferase 2B17 from Rattus norvegicus (Rat).